Here is a 540-residue protein sequence, read N- to C-terminus: IQ motif and ankyrin repeat domain-containing protein 1 (540 aa).

Residues 1–17 (MSTKKGGPKAASGKGQA) show a composition bias toward low complexity. Positions 1-62 (MSTKKGGPKA…PQAPAAPTAE (62 aa)) are disordered. In terms of domain architecture, IQ spans 62 to 91 (EDKAAIVIQCAFRQYLARRELARRCQERQE). ANK repeat units lie at residues 191-220 (HGNT…NPNT) and 224-253 (FGRT…DPRM). Residues 281 to 388 (LTEAMLKNME…EETLAMARLE (108 aa)) are a coiled coil.

The protein is IQ motif and ankyrin repeat domain-containing protein 1 of Mus musculus (Mouse).